Consider the following 465-residue polypeptide: MVRGRHRSRDPQRRDLRGRDRRSASRTDARRQSAAERGCRRSQRGSAEGCACGRQTGPRAARSACCTACPSRSRRMSTTEGRPNFNGVPANKDFVAPSDSPVVHNLKKAGAIVIGLTNTPEFSFRGFTDNPLHGLTLNPWDPNITCGGSSGGAGSAVAAGIGTIAHGNDIGGSLRWPAHCNGVATIKPTQGRIPAFNGSATAERPMLAHLMSAQGPLARHVGDVRLALDVMSQADPRDPWWVPAPLAGPRPKGPIKVALARIPEDMDVDPSVRAALRQAADHLERSGYRVTEVDVPDIDGVWQTWCDIITNETVVMQEAGMLKVTSEDFHKAWGGMKTKANVLDLKAWMQATAARNGHIRAWQLFFEEYPVVLAPTTVKPTPGPRDDTVSADRVKEIFWGEIRFISAINVLGLPGAVVPVTLHDGKPIGVQLIAGRYREDLALDAAAAIEKRAGVLAHRLWETME.

The segment at 1–40 is disordered; it reads MVRGRHRSRDPQRRDLRGRDRRSASRTDARRQSAAERGCR. The segment covering 9-39 has biased composition (basic and acidic residues); sequence RDPQRRDLRGRDRRSASRTDARRQSAAERGC. Residue serine 149 is the Charge relay system of the active site. The active-site Acyl-ester intermediate is the serine 173.

The protein belongs to the amidase family.

The protein operates within plant hormone metabolism; auxin biosynthesis. Its function is as follows. Hydrolyzes indole-3-acetamide (IAM) into indole-3-acetic acid (IAA). The protein is Indoleacetamide hydrolase (bam) of Bradyrhizobium japonicum.